We begin with the raw amino-acid sequence, 340 residues long: Anthranilate phosphoribosyltransferase (340 aa).

5-phospho-alpha-D-ribose 1-diphosphate-binding positions include glycine 79, 82–83 (GD), threonine 87, 89–92 (NIST), 107–115 (KHGNRAVTG), and serine 119. An anthranilate-binding site is contributed by glycine 79. Residue serine 91 participates in Mg(2+) binding. Residue asparagine 110 participates in anthranilate binding. Arginine 165 is a binding site for anthranilate. Mg(2+) is bound by residues aspartate 224 and glutamate 225.

Belongs to the anthranilate phosphoribosyltransferase family. Homodimer. Requires Mg(2+) as cofactor.

The enzyme catalyses N-(5-phospho-beta-D-ribosyl)anthranilate + diphosphate = 5-phospho-alpha-D-ribose 1-diphosphate + anthranilate. The protein operates within amino-acid biosynthesis; L-tryptophan biosynthesis; L-tryptophan from chorismate: step 2/5. Catalyzes the transfer of the phosphoribosyl group of 5-phosphorylribose-1-pyrophosphate (PRPP) to anthranilate to yield N-(5'-phosphoribosyl)-anthranilate (PRA). The protein is Anthranilate phosphoribosyltransferase of Syntrophomonas wolfei subsp. wolfei (strain DSM 2245B / Goettingen).